A 49-amino-acid chain; its full sequence is Sperm protamine P1 (49 aa).

This sequence belongs to the protamine P1 family. As to expression, testis.

Its subcellular location is the nucleus. It localises to the chromosome. Functionally, protamines substitute for histones in the chromatin of sperm during the haploid phase of spermatogenesis. They compact sperm DNA into a highly condensed, stable and inactive complex. This is Sperm protamine P1 (PRM1) from Rhinopoma hardwickii (Lesser mouse-tailed bat).